We begin with the raw amino-acid sequence, 413 residues long: Acyltransferase mokF (413 aa).

Arg93 is a binding site for monacolin J. Ser96 serves as the catalytic Acyl-ester intermediate. Monacolin J is bound by residues Arg193, Tyr208, and Tyr278. A 2-methylbutanoate-binding site is contributed by Gly386.

This sequence belongs to the class-A beta-lactamase family.

The catalysed reaction is monacolin J carboxylate + (S)-2-methylbutanoyl-[2-methylbutanoate polyketide synthase] = lovastatin carboxylate + holo-[2-methylbutanoate polyketide synthase]. It functions in the pathway polyketide biosynthesis; lovastatin biosynthesis. Acyltransferase; part of the gene cluster that mediates the biosynthesis of monakolin K, also known as lovastatin, and which acts as a potent competitive inhibitor of HMG-CoA reductase. Monakolin K biosynthesis is performed in two stages. The first stage is catalyzed by the nonaketide synthase mokA, which belongs to type I polyketide synthases and catalyzes the iterative nine-step formation of the polyketide. This PKS stage is completed by the action of dehydrogenase mokE, which catalyzes the NADPH-dependent reduction of the unsaturated tetra-, penta- and heptaketide intermediates that arise during the mokA-mediated biosynthesis of the nonaketide chain and leads to dihydromonacolin L. Covalently bound dihydromonacolin L is released from mokA by the mokD esterase. Conversion of dihydromonacolin L into monacolin L and then monacolin J is subsequently performed with the participation of molecular oxygen and P450 monoogygenase mokC. Finally, mokF performs the conversion of monacoline J to monacoline K through the addition of the side-chain diketide moiety (2R)-2-methylbutanoate produced by the diketide synthase mokB. The polypeptide is Acyltransferase mokF (Monascus pilosus (Red mold)).